The primary structure comprises 330 residues: Malate dehydrogenase (330 aa).

Position 12-18 (12-18 (GAAGQIG)) interacts with NAD(+). Substrate contacts are provided by Arg-93 and Arg-99. NAD(+) contacts are provided by residues Asn-106, Gln-113, and 130–132 (VGN). Substrate contacts are provided by Asn-132 and Arg-163. The Proton acceptor role is filled by His-188.

It belongs to the LDH/MDH superfamily. MDH type 2 family.

The catalysed reaction is (S)-malate + NAD(+) = oxaloacetate + NADH + H(+). Functionally, catalyzes the reversible oxidation of malate to oxaloacetate. The protein is Malate dehydrogenase of Legionella pneumophila subsp. pneumophila (strain Philadelphia 1 / ATCC 33152 / DSM 7513).